Here is a 265-residue protein sequence, read N- to C-terminus: Hydroxyacylglutathione hydrolase (265 aa).

Residues His53, His55, Asp57, His58, His109, Asp126, and His164 each contribute to the Zn(2+) site.

It belongs to the metallo-beta-lactamase superfamily. Glyoxalase II family. As to quaternary structure, monomer. The cofactor is Zn(2+).

It catalyses the reaction an S-(2-hydroxyacyl)glutathione + H2O = a 2-hydroxy carboxylate + glutathione + H(+). It participates in secondary metabolite metabolism; methylglyoxal degradation; (R)-lactate from methylglyoxal: step 2/2. Thiolesterase that catalyzes the hydrolysis of S-D-lactoyl-glutathione to form glutathione and D-lactic acid. The chain is Hydroxyacylglutathione hydrolase from Dechloromonas aromatica (strain RCB).